An 80-amino-acid polypeptide reads, in one-letter code: Metallothionein-like protein BIF98 (80 aa).

This sequence belongs to the metallothionein superfamily. Type 15 family.

Metallothioneins have a high content of cysteine residues that bind various heavy metals. This chain is Metallothionein-like protein BIF98, found in Brassica rapa subsp. pekinensis (Chinese cabbage).